The following is a 310-amino-acid chain: Probable cell division protein WhiA (310 aa).

The segment at residues 274–308 is a DNA-binding region (H-T-H motif); sequence SLKELGTLVPGGPISKSGINHRLRKINQFAEQLQK.

The protein belongs to the WhiA family.

Functionally, involved in cell division and chromosome segregation. This chain is Probable cell division protein WhiA, found in Lactiplantibacillus plantarum (strain ATCC BAA-793 / NCIMB 8826 / WCFS1) (Lactobacillus plantarum).